The primary structure comprises 767 residues: Phosphoribosylformylglycinamidine synthase subunit PurL (767 aa).

His46 is an active-site residue. Residues Tyr49 and Lys88 each contribute to the ATP site. Glu90 contributes to the Mg(2+) binding site. Residues 91–94 and Arg113 each bind substrate; that span reads SHNH. His92 acts as the Proton acceptor in catalysis. Asp114 is a Mg(2+) binding site. Gln237 provides a ligand contact to substrate. Mg(2+) is bound at residue Asp265. A substrate-binding site is contributed by 309-311; sequence ESQ. Positions 498 and 535 each coordinate ATP. Asn536 is a Mg(2+) binding site. Ser538 contacts substrate.

The protein belongs to the FGAMS family. In terms of assembly, monomer. Part of the FGAM synthase complex composed of 1 PurL, 1 PurQ and 2 PurS subunits.

Its subcellular location is the cytoplasm. It catalyses the reaction N(2)-formyl-N(1)-(5-phospho-beta-D-ribosyl)glycinamide + L-glutamine + ATP + H2O = 2-formamido-N(1)-(5-O-phospho-beta-D-ribosyl)acetamidine + L-glutamate + ADP + phosphate + H(+). Its pathway is purine metabolism; IMP biosynthesis via de novo pathway; 5-amino-1-(5-phospho-D-ribosyl)imidazole from N(2)-formyl-N(1)-(5-phospho-D-ribosyl)glycinamide: step 1/2. Functionally, part of the phosphoribosylformylglycinamidine synthase complex involved in the purines biosynthetic pathway. Catalyzes the ATP-dependent conversion of formylglycinamide ribonucleotide (FGAR) and glutamine to yield formylglycinamidine ribonucleotide (FGAM) and glutamate. The FGAM synthase complex is composed of three subunits. PurQ produces an ammonia molecule by converting glutamine to glutamate. PurL transfers the ammonia molecule to FGAR to form FGAM in an ATP-dependent manner. PurS interacts with PurQ and PurL and is thought to assist in the transfer of the ammonia molecule from PurQ to PurL. In Anaeromyxobacter sp. (strain Fw109-5), this protein is Phosphoribosylformylglycinamidine synthase subunit PurL.